The following is a 159-amino-acid chain: ATP synthase subunit b 1 (159 aa).

A helical transmembrane segment spans residues 5–25 (FWAFIGLILFLALLFYFKVPA).

This sequence belongs to the ATPase B chain family. In terms of assembly, F-type ATPases have 2 components, F(1) - the catalytic core - and F(0) - the membrane proton channel. F(1) has five subunits: alpha(3), beta(3), gamma(1), delta(1), epsilon(1). F(0) has three main subunits: a(1), b(2) and c(10-14). The alpha and beta chains form an alternating ring which encloses part of the gamma chain. F(1) is attached to F(0) by a central stalk formed by the gamma and epsilon chains, while a peripheral stalk is formed by the delta and b chains.

It localises to the cell inner membrane. Functionally, f(1)F(0) ATP synthase produces ATP from ADP in the presence of a proton or sodium gradient. F-type ATPases consist of two structural domains, F(1) containing the extramembraneous catalytic core and F(0) containing the membrane proton channel, linked together by a central stalk and a peripheral stalk. During catalysis, ATP synthesis in the catalytic domain of F(1) is coupled via a rotary mechanism of the central stalk subunits to proton translocation. In terms of biological role, component of the F(0) channel, it forms part of the peripheral stalk, linking F(1) to F(0). The chain is ATP synthase subunit b 1 from Bartonella bacilliformis (strain ATCC 35685 / KC583 / Herrer 020/F12,63).